The primary structure comprises 81 residues: ATP synthase subunit c (81 aa).

2 helical membrane-spanning segments follow: residues 6–26 and 57–77; these read AAASVIAAALAVGLGAIGPGI and LAFMESLTIYGLVIALVLLFA.

The protein belongs to the ATPase C chain family. In terms of assembly, F-type ATPases have 2 components, F(1) - the catalytic core - and F(0) - the membrane proton channel. F(1) has five subunits: alpha(3), beta(3), gamma(1), delta(1), epsilon(1). F(0) has four main subunits: a(1), b(1), b'(1) and c(10-14). The alpha and beta chains form an alternating ring which encloses part of the gamma chain. F(1) is attached to F(0) by a central stalk formed by the gamma and epsilon chains, while a peripheral stalk is formed by the delta, b and b' chains.

Its subcellular location is the cellular thylakoid membrane. In terms of biological role, f(1)F(0) ATP synthase produces ATP from ADP in the presence of a proton or sodium gradient. F-type ATPases consist of two structural domains, F(1) containing the extramembraneous catalytic core and F(0) containing the membrane proton channel, linked together by a central stalk and a peripheral stalk. During catalysis, ATP synthesis in the catalytic domain of F(1) is coupled via a rotary mechanism of the central stalk subunits to proton translocation. Its function is as follows. Key component of the F(0) channel; it plays a direct role in translocation across the membrane. A homomeric c-ring of between 10-14 subunits forms the central stalk rotor element with the F(1) delta and epsilon subunits. The protein is ATP synthase subunit c of Synechocystis sp. (strain ATCC 27184 / PCC 6803 / Kazusa).